The following is a 166-amino-acid chain: NAD(P)H-quinone oxidoreductase subunit I, chloroplastic (166 aa).

4Fe-4S ferredoxin-type domains are found at residues 55–84 (GRIH…VDWK) and 95–124 (LNYS…MTEE). [4Fe-4S] cluster-binding residues include Cys64, Cys67, Cys70, Cys74, Cys104, Cys107, Cys110, and Cys114.

It belongs to the complex I 23 kDa subunit family. In terms of assembly, NDH is composed of at least 16 different subunits, 5 of which are encoded in the nucleus. The cofactor is [4Fe-4S] cluster.

The protein resides in the plastid. It localises to the chloroplast thylakoid membrane. It carries out the reaction a plastoquinone + NADH + (n+1) H(+)(in) = a plastoquinol + NAD(+) + n H(+)(out). The catalysed reaction is a plastoquinone + NADPH + (n+1) H(+)(in) = a plastoquinol + NADP(+) + n H(+)(out). Functionally, NDH shuttles electrons from NAD(P)H:plastoquinone, via FMN and iron-sulfur (Fe-S) centers, to quinones in the photosynthetic chain and possibly in a chloroplast respiratory chain. The immediate electron acceptor for the enzyme in this species is believed to be plastoquinone. Couples the redox reaction to proton translocation, and thus conserves the redox energy in a proton gradient. The polypeptide is NAD(P)H-quinone oxidoreductase subunit I, chloroplastic (Parthenium hysterophorus (Santa Maria feverfew)).